Here is a 419-residue protein sequence, read N- to C-terminus: WD repeat-containing protein JIP5 (419 aa).

WD repeat units lie at residues 4-45 (ALSS…HNQS), 66-105 (PSHKSCRGVAFDASGSNLFCIFKDKSIIALDPSDGHVKAR), 108-147 (RAHESAPSRILPIHEGLMATGDDDGIVRLWDPRCPPEGDA), 180-220 (DQED…KGVE), 224-263 (DQEDELLSIASIKNGKKLVVGTQLGVLSLWAPDRGLLDHA), 268-308 (GHPS…GIVG), and 351-390 (DAAEPEPAVMLVSDEAHLIARSADGSDESAGESDVMQPPP). Residues 172–192 (DPPRSKKKDQEDDLKRKRDEE) are disordered. The disordered stretch occupies residues 372 to 408 (SADGSDESAGESDVMQPPPATKRRTAKSKAGKKSVHD). A compositionally biased stretch (basic residues) spans 392–404 (TKRRTAKSKAGKK).

Belongs to the WD repeat WDR55 family.

The protein localises to the nucleus. The protein resides in the nucleolus. The polypeptide is WD repeat-containing protein JIP5 (JIP5) (Malassezia globosa (strain ATCC MYA-4612 / CBS 7966) (Dandruff-associated fungus)).